The primary structure comprises 105 residues: Guanidinium exporter (105 aa).

Residue M1 is a topological domain, cytoplasmic. A helical membrane pass occupies residues 2-19 (SWIVLLIAGLLEVVWAIG). The Periplasmic segment spans residues 20–28 (LKYTHGFTR). The helical transmembrane segment at 29–48 (LTPSIITIAAMIVSIAMLSW) threads the bilayer. Topologically, residues 49–54 (AMRTLP) are cytoplasmic. A helical membrane pass occupies residues 55-77 (VGTAYAVWTGIGAVGAAITGILL). Over 78–86 (LGESASPAR) the chain is Periplasmic. Residues 87–104 (LLSLGLIVAGIIGLKLST) traverse the membrane as a helical segment. Residue H105 is a topological domain, cytoplasmic.

Belongs to the drug/metabolite transporter (DMT) superfamily. Small multidrug resistance (SMR) (TC 2.A.7.1) family. Gdx/SugE subfamily.

The protein resides in the cell inner membrane. Guanidinium ion exporter. Couples guanidinium export to the proton motive force, exchanging one guanidinium ion for two protons. This is Guanidinium exporter from Citrobacter freundii.